Reading from the N-terminus, the 435-residue chain is Glutamyl-tRNA reductase (435 aa).

Substrate contacts are provided by residues 50–53 (TCNR), Ser-110, 115–117 (ETQ), and Gln-121. The active-site Nucleophile is the Cys-51. 189 to 194 (GAGEMS) is a binding site for NADP(+).

The protein belongs to the glutamyl-tRNA reductase family. Homodimer.

The enzyme catalyses (S)-4-amino-5-oxopentanoate + tRNA(Glu) + NADP(+) = L-glutamyl-tRNA(Glu) + NADPH + H(+). The protein operates within porphyrin-containing compound metabolism; protoporphyrin-IX biosynthesis; 5-aminolevulinate from L-glutamyl-tRNA(Glu): step 1/2. Its function is as follows. Catalyzes the NADPH-dependent reduction of glutamyl-tRNA(Glu) to glutamate 1-semialdehyde (GSA). The chain is Glutamyl-tRNA reductase from Campylobacter lari (strain RM2100 / D67 / ATCC BAA-1060).